The following is a 402-amino-acid chain: MSLKYYLNDLSDSDSESESECAEGSSPQDEQNGFYDYRSPPDSADTSIFEDTGRSSSERPMSPTEVCSTDFEEKVPFSSELVVIPESMLKKREEYGRFFSNFKKAIYHLPADEEEWDRQERLHQSFIEMFGRKYPPELSEILKSDEYYEKRCLDLGCGTGCWIKEVARDFPYCEAVGVDLVVVPDTRDFPPNLRCEMDDVNLGLQHFFGRFDVVHARLLSSGIKDYQLLIENIARTLRPGGLVELQEYDFHIYDCNRRRFELSTNELAPPWWPRWMTFFNEAIRKMQGDVDAATHLLKWVRTHPGFEQVRYEERWIPIIPGNLDPLEPMYARLQADVSVYLRSGRPLLLKSGLSEMEVDILENNAIREFYESETTQYTRLQCVCARRNNAVLDHLPPSYNFR.

A disordered region spans residues 1 to 70; it reads MSLKYYLNDL…MSPTEVCSTD (70 aa). Acidic residues predominate over residues 11–21; the sequence is SDSDSESESEC.

It belongs to the methyltransferase superfamily. LaeA methyltransferase family.

The protein localises to the nucleus. The enzyme catalyses L-methionyl-[protein] + S-adenosyl-L-methionine = S-methyl-L-methionyl-[protein] + S-adenosyl-L-homocysteine. Functionally, methyltransferase that performs automethylation. No other methyl-accepting substrate has been identified yet. Acts as a global regulator for secondary metabolite gene expression. Negatively regulates the production of coprinoferrin, a structurally novel acylated tripeptide hydroxamate siderophore. The polypeptide is Secondary metabolism regulator laeA (Coprinopsis cinerea (strain Okayama-7 / 130 / ATCC MYA-4618 / FGSC 9003) (Inky cap fungus)).